The primary structure comprises 409 residues: Peptidase T (409 aa).

His-78 provides a ligand contact to Zn(2+). The active site involves Asp-80. Asp-141 contributes to the Zn(2+) binding site. The active-site Proton acceptor is Glu-175. Residues Glu-176, Asp-198, and His-380 each contribute to the Zn(2+) site.

This sequence belongs to the peptidase M20B family. Zn(2+) is required as a cofactor.

The protein localises to the cytoplasm. It catalyses the reaction Release of the N-terminal residue from a tripeptide.. In terms of biological role, cleaves the N-terminal amino acid of tripeptides. The protein is Peptidase T of Caldanaerobacter subterraneus subsp. tengcongensis (strain DSM 15242 / JCM 11007 / NBRC 100824 / MB4) (Thermoanaerobacter tengcongensis).